A 489-amino-acid polypeptide reads, in one-letter code: 2-(3-amino-3-carboxypropyl)histidine synthase subunit 2 (489 aa).

M1 bears the N-acetylmethionine mark. S7 carries the post-translational modification Phosphoserine. [4Fe-4S] cluster contacts are provided by C89, C110, and C341. A Phosphothreonine modification is found at T435. Phosphoserine occurs at positions 446 and 456. A Phosphothreonine modification is found at T467. At S488 the chain carries Phosphoserine.

Belongs to the DPH1/DPH2 family. DPH2 subfamily. Component of the 2-(3-amino-3-carboxypropyl)histidine synthase complex composed of DPH1, DPH2, DPH3 and a NADH-dependent reductase. Interacts with DPH1. Requires [4Fe-4S] cluster as cofactor. In terms of tissue distribution, strongly expressed in skeletal muscle. Moderately expressed in heart, small intestine, liver, pancreas, testis and colon. Weakly expressed in brain, placenta, kidney, spleen, thymus, prostate, ovary and lymphocytes.

Its pathway is protein modification; peptidyl-diphthamide biosynthesis. Functionally, required for the first step of diphthamide biosynthesis, a post-translational modification of histidine which occurs in elongation factor 2. DPH1 and DPH2 transfer a 3-amino-3-carboxypropyl (ACP) group from S-adenosyl-L-methionine (SAM) to a histidine residue, the reaction is assisted by a reduction system comprising DPH3 and a NADH-dependent reductase. Facilitates the reduction of the catalytic iron-sulfur cluster found in the DPH1 subunit. The protein is 2-(3-amino-3-carboxypropyl)histidine synthase subunit 2 (DPH2) of Homo sapiens (Human).